We begin with the raw amino-acid sequence, 356 residues long: Protein pelota homolog (356 aa).

This sequence belongs to the eukaryotic release factor 1 family. Pelota subfamily. As to quaternary structure, monomer. The cofactor is a divalent metal cation.

The protein resides in the cytoplasm. In terms of biological role, may function in recognizing stalled ribosomes, interact with stem-loop structures in stalled mRNA molecules, and effect endonucleolytic cleavage of the mRNA. May play a role in the release non-functional ribosomes and degradation of damaged mRNAs. Has endoribonuclease activity. The sequence is that of Protein pelota homolog from Desulfurococcus amylolyticus (strain DSM 18924 / JCM 16383 / VKM B-2413 / 1221n) (Desulfurococcus kamchatkensis).